The following is a 456-amino-acid chain: tRNA modification GTPase MnmE (456 aa).

R24, E81, and K120 together coordinate (6S)-5-formyl-5,6,7,8-tetrahydrofolate. One can recognise a TrmE-type G domain in the interval 216 to 379 (GMTVVIAGRP…LRDHLKACMG (164 aa)). N226 contributes to the K(+) binding site. GTP contacts are provided by residues 226-231 (NAGKSS), 245-251 (TAIAGTT), 270-273 (DTAG), and 335-338 (NKAD). S230 is a binding site for Mg(2+). K(+)-binding residues include T245, I247, and T250. T251 contacts Mg(2+). (6S)-5-formyl-5,6,7,8-tetrahydrofolate is bound at residue K456.

Belongs to the TRAFAC class TrmE-Era-EngA-EngB-Septin-like GTPase superfamily. TrmE GTPase family. As to quaternary structure, homodimer. Heterotetramer of two MnmE and two MnmG subunits. K(+) serves as cofactor.

The protein localises to the cytoplasm. In terms of biological role, exhibits a very high intrinsic GTPase hydrolysis rate. Involved in the addition of a carboxymethylaminomethyl (cmnm) group at the wobble position (U34) of certain tRNAs, forming tRNA-cmnm(5)s(2)U34. In Pseudomonas putida (strain W619), this protein is tRNA modification GTPase MnmE.